The primary structure comprises 402 residues: mRNA-capping enzyme subunit alpha (402 aa).

The active-site N6-GMP-lysine intermediate is the Lys-66.

The protein belongs to the eukaryotic GTase family. Heterodimer. The mRNA-capping enzyme is composed of two separate chains alpha and beta, respectively a mRNA guanylyltransferase and an mRNA 5'-triphosphate monophosphatase.

It localises to the nucleus. It carries out the reaction a 5'-end diphospho-ribonucleoside in mRNA + GTP + H(+) = a 5'-end (5'-triphosphoguanosine)-ribonucleoside in mRNA + diphosphate. Its function is as follows. Second step of mRNA capping. Transfer of the GMP moiety of GTP to the 5'-end of RNA via an enzyme-GMP covalent reaction intermediate. The sequence is that of mRNA-capping enzyme subunit alpha (rnp-2) from Neurospora crassa (strain ATCC 24698 / 74-OR23-1A / CBS 708.71 / DSM 1257 / FGSC 987).